Consider the following 557-residue polypeptide: UvrABC system protein C (557 aa).

Positions 14–89 (EEPGVYIFKN…IKKYRPKYNV (76 aa)) constitute a GIY-YIG domain. The 36-residue stretch at 194–229 (EEVFDYLKEKMETHSKMLDFENAAKYRDLLLNLSNV) folds into the UVR domain.

This sequence belongs to the UvrC family. In terms of assembly, interacts with UvrB in an incision complex.

The protein localises to the cytoplasm. Its function is as follows. The UvrABC repair system catalyzes the recognition and processing of DNA lesions. UvrC both incises the 5' and 3' sides of the lesion. The N-terminal half is responsible for the 3' incision and the C-terminal half is responsible for the 5' incision. In Thermotoga sp. (strain RQ2), this protein is UvrABC system protein C.